The sequence spans 334 residues: MRFVDEVVIKLQAGKGGNGCVSFRREKYVPRGGPDGGDGGNGGSIYLKADENVNTLIDYRYKREYYAENGRPGEGRNCYGKAGEDLYLVVPVGTSVFNIDTNKKIGEVLQHGQTFKLVSGGKRGIGNTHFKSSTNQAPRKFTLGEEGEYKEVRLELNLLADVALLGLPNAGKSTLIRSVSEATPKVADYPFTTMYPHLGVVKVGVDSFVMADIPGVIEGAAEGAGLGLRFLKHLTRARCVLHVVDICPFNESDPVENYFAVEKELEKYSQELFDKPRFLVINKIDLLADKVEQKCQEFVEQIGYQGNYYTISAAMKKGTDELAKKLNEFLQKQQ.

The 159-residue stretch at 1 to 159 (MRFVDEVVIK…KEVRLELNLL (159 aa)) folds into the Obg domain. One can recognise an OBG-type G domain in the interval 160 to 331 (ADVALLGLPN…LAKKLNEFLQ (172 aa)). GTP is bound by residues 166–173 (GLPNAGKS), 191–195 (FTTMY), 212–215 (DIPG), 282–285 (NKID), and 312–314 (SAA). Residues Ser-173 and Thr-193 each coordinate Mg(2+).

Belongs to the TRAFAC class OBG-HflX-like GTPase superfamily. OBG GTPase family. As to quaternary structure, monomer. Requires Mg(2+) as cofactor.

Its subcellular location is the cytoplasm. In terms of biological role, an essential GTPase which binds GTP, GDP and possibly (p)ppGpp with moderate affinity, with high nucleotide exchange rates and a fairly low GTP hydrolysis rate. Plays a role in control of the cell cycle, stress response, ribosome biogenesis and in those bacteria that undergo differentiation, in morphogenesis control. The protein is GTPase Obg of Francisella tularensis subsp. tularensis (strain WY96-3418).